The primary structure comprises 940 residues: MLKLFTSSASRVHHLTPVSRVVGSSPVESPLFKALSQITGWNRRSTSLGHRAFFCSEPTNGEAAAEAETKAVESDSEVSDSKSSSAIVPTNPRPEDCLTVLALPVPHRPLFPGFYMPIYVKDPKVLAALQESRRRQAPYAGAFLLKDDPSADSSSSTDAEKNINELKGKELLNRLHEVGTLAQISSIQGDQVILVGHRRLRIKEMVSEEPLTVKVDHLKDNPFDMDDDVVKATSFEVISTLRDVLKTSSLWRDHVQTYTQHIGDFTYPRLADFGAAICGANRHQAQEVLEELDVHKRLRLTLELMKKEMEISKIQETIAKAIEEKISGEQRRYLLNEQLKAIKKELGVETDDKSALSAKFKERIEPNKEKIPAHVLQVIEEELTKLQLLEASSSEFNVTRNYLDWLTILPWGNYSNENFDVARAQTILDEDHYGLSDVKERILEFIAVGRLRGTSQGKIICLSGPPGVGKTSIGRSIARALNRKFFRFSVGGLADVAEIKGHRRTYVGAMPGKMVQCLKSVGTANPLVLIDEIDKLGRGHAGDPASALLELLDPEQNANFLDHYLDVTIDLSKVLFVCTANVIDMIPNPLLDRMEVISIAGYITDEKVHIARDYLEKTARGDCGVKPEQVEVSDAALLSLIENYCREAGVRNLQKQIEKIYRKIALKLVREGAVPEEPAVASDPEEAEIVADVGESIENHTVEENTVSSAEEPKEEAQTEKIAIETVMIDESNLADYVGKPVFHAEKLYEQTPVGVVMGLAWTSMGGSTLYIETTVVEEGEGKGGLNITGQLGDVMKESAQIAHTVARKIMLEKEPENQFFANSKLHLHVPAGATPKDGPSAGCTMITSLLSLATKKPVRKDLAMTGEVTLTGRILPIGGVKEKTIAARRSQIKTIIFPEANRRDFDELAENVKEGLNVHFVDDYGKIFELAFGYDKQED.

A mitochondrion-targeting transit peptide spans 1-61 (MLKLFTSSAS…AFFCSEPTNG (61 aa)). A disordered region spans residues 70–90 (KAVESDSEVSDSKSSSAIVPT). Serine 74 is subject to Phosphoserine. The Lon N-terminal domain maps to 100–309 (VLALPVPHRP…LTLELMKKEM (210 aa)). Position 464–471 (464–471 (GPPGVGKT)) interacts with ATP. The Lon proteolytic domain occupies 751 to 935 (QTPVGVVMGL…GKIFELAFGY (185 aa)). Residues serine 841 and lysine 884 contribute to the active site.

Belongs to the peptidase S16 family. As to quaternary structure, homohexamer or homoheptamer. Organized in a ring with a central cavity.

The protein localises to the mitochondrion matrix. It catalyses the reaction Hydrolysis of proteins in presence of ATP.. In terms of biological role, ATP-dependent serine protease that mediates the selective degradation of misfolded, unassembled or oxidatively damaged polypeptides as well as certain short-lived regulatory proteins in the mitochondrial matrix. May also have a chaperone function in the assembly of inner membrane protein complexes. Participates in the regulation of mitochondrial gene expression and in the maintenance of the integrity of the mitochondrial genome. Binds to mitochondrial DNA in a site-specific manner. This Arabidopsis thaliana (Mouse-ear cress) protein is Lon protease homolog 1, mitochondrial (LON1).